The sequence spans 268 residues: Undecaprenyl-diphosphatase (268 aa).

Transmembrane regions (helical) follow at residues 3–23 (VFNL…EFIP), 46–66 (FEVL…SAKL), 84–104 (FGIL…HGFI), 107–127 (VLFE…FILL), 144–164 (YPLP…IPGV), 184–204 (AAEF…AYDL), 218–238 (LIGV…RYLL), and 248–268 (LFGW…LVWG).

Belongs to the UppP family.

It is found in the cell inner membrane. The enzyme catalyses di-trans,octa-cis-undecaprenyl diphosphate + H2O = di-trans,octa-cis-undecaprenyl phosphate + phosphate + H(+). Functionally, catalyzes the dephosphorylation of undecaprenyl diphosphate (UPP). Confers resistance to bacitracin. The sequence is that of Undecaprenyl-diphosphatase from Brucella anthropi (strain ATCC 49188 / DSM 6882 / CCUG 24695 / JCM 21032 / LMG 3331 / NBRC 15819 / NCTC 12168 / Alc 37) (Ochrobactrum anthropi).